A 476-amino-acid chain; its full sequence is Bifunctional protein HldE (476 aa).

A ribokinase region spans residues 1–319; that stretch reads MKVSLPAFEK…EALALHHGES (319 aa). 195–198 is an ATP binding site; it reads NMSE. D264 is a catalytic residue. Residues 345-476 are cytidylyltransferase; that stretch reads MTNGCFDILH…AIIQNIMANQ (132 aa).

The protein in the N-terminal section; belongs to the carbohydrate kinase PfkB family. This sequence in the C-terminal section; belongs to the cytidylyltransferase family. As to quaternary structure, homodimer.

The enzyme catalyses D-glycero-beta-D-manno-heptose 7-phosphate + ATP = D-glycero-beta-D-manno-heptose 1,7-bisphosphate + ADP + H(+). It carries out the reaction D-glycero-beta-D-manno-heptose 1-phosphate + ATP + H(+) = ADP-D-glycero-beta-D-manno-heptose + diphosphate. The protein operates within nucleotide-sugar biosynthesis; ADP-L-glycero-beta-D-manno-heptose biosynthesis; ADP-L-glycero-beta-D-manno-heptose from D-glycero-beta-D-manno-heptose 7-phosphate: step 1/4. It participates in nucleotide-sugar biosynthesis; ADP-L-glycero-beta-D-manno-heptose biosynthesis; ADP-L-glycero-beta-D-manno-heptose from D-glycero-beta-D-manno-heptose 7-phosphate: step 3/4. Its function is as follows. Catalyzes the phosphorylation of D-glycero-D-manno-heptose 7-phosphate at the C-1 position to selectively form D-glycero-beta-D-manno-heptose-1,7-bisphosphate. In terms of biological role, catalyzes the ADP transfer from ATP to D-glycero-beta-D-manno-heptose 1-phosphate, yielding ADP-D-glycero-beta-D-manno-heptose. This Shewanella putrefaciens (strain CN-32 / ATCC BAA-453) protein is Bifunctional protein HldE.